The following is a 304-amino-acid chain: Elongation factor Ts (304 aa).

The interval 82–85 (TDFV) is involved in Mg(2+) ion dislocation from EF-Tu.

The protein belongs to the EF-Ts family.

The protein localises to the cytoplasm. Its function is as follows. Associates with the EF-Tu.GDP complex and induces the exchange of GDP to GTP. It remains bound to the aminoacyl-tRNA.EF-Tu.GTP complex up to the GTP hydrolysis stage on the ribosome. The chain is Elongation factor Ts from Symbiobacterium thermophilum (strain DSM 24528 / JCM 14929 / IAM 14863 / T).